The following is a 373-amino-acid chain: Queuine tRNA-ribosyltransferase (373 aa).

The active-site Proton acceptor is D93. Residues 93–97 (DSGGF), D147, Q189, and G216 contribute to the substrate site. The interval 247 to 253 (GVGAPED) is RNA binding. The active-site Nucleophile is D266. An RNA binding; important for wobble base 34 recognition region spans residues 271 to 275 (TRIAR). Residues C304, C306, C309, and H335 each coordinate Zn(2+).

The protein belongs to the queuine tRNA-ribosyltransferase family. As to quaternary structure, homodimer. Within each dimer, one monomer is responsible for RNA recognition and catalysis, while the other monomer binds to the replacement base PreQ1. Requires Zn(2+) as cofactor.

The catalysed reaction is 7-aminomethyl-7-carbaguanine + guanosine(34) in tRNA = 7-aminomethyl-7-carbaguanosine(34) in tRNA + guanine. The protein operates within tRNA modification; tRNA-queuosine biosynthesis. In terms of biological role, catalyzes the base-exchange of a guanine (G) residue with the queuine precursor 7-aminomethyl-7-deazaguanine (PreQ1) at position 34 (anticodon wobble position) in tRNAs with GU(N) anticodons (tRNA-Asp, -Asn, -His and -Tyr). Catalysis occurs through a double-displacement mechanism. The nucleophile active site attacks the C1' of nucleotide 34 to detach the guanine base from the RNA, forming a covalent enzyme-RNA intermediate. The proton acceptor active site deprotonates the incoming PreQ1, allowing a nucleophilic attack on the C1' of the ribose to form the product. After dissociation, two additional enzymatic reactions on the tRNA convert PreQ1 to queuine (Q), resulting in the hypermodified nucleoside queuosine (7-(((4,5-cis-dihydroxy-2-cyclopenten-1-yl)amino)methyl)-7-deazaguanosine). This is Queuine tRNA-ribosyltransferase from Halothermothrix orenii (strain H 168 / OCM 544 / DSM 9562).